A 941-amino-acid chain; its full sequence is Translation initiation factor IF-2 (941 aa).

Disordered stretches follow at residues 61-204 and 249-274; these read IQSN…RREN and QEKDKETKKAKKSNKPKAIPAAKNNK. The span at 147 to 163 shows a compositional bias: basic and acidic residues; that stretch reads EKAKQKLQEIQKSREAL. Over residues 164 to 179 the composition is skewed to low complexity; sequence NKLTQSNTNNANNANS. A compositionally biased stretch (basic and acidic residues) spans 180–204; the sequence is AKKEISEVAKQEREQEHLDNKRREN. A tr-type G domain is found at 440–609; it reads ERPPVVTIMG…LIQADIMELK (170 aa). A G1 region spans residues 449–456; sequence GHVDHGKT. 449–456 is a GTP binding site; sequence GHVDHGKT. The interval 474–478 is G2; it reads GITQH. The interval 495-498 is G3; it reads DTPG. Residues 495-499 and 549-552 each bind GTP; these read DTPGH and NKMD. A G4 region spans residues 549–552; it reads NKMD. Residues 585–587 are G5; sequence SAK.

It belongs to the TRAFAC class translation factor GTPase superfamily. Classic translation factor GTPase family. IF-2 subfamily.

Its subcellular location is the cytoplasm. One of the essential components for the initiation of protein synthesis. Protects formylmethionyl-tRNA from spontaneous hydrolysis and promotes its binding to the 30S ribosomal subunits. Also involved in the hydrolysis of GTP during the formation of the 70S ribosomal complex. The sequence is that of Translation initiation factor IF-2 from Helicobacter acinonychis (strain Sheeba).